Here is an 828-residue protein sequence, read N- to C-terminus: Periplasmic nitrate reductase (828 aa).

The tat-type signal signal peptide spans 1–32 (MNLSRRDFMKTNAAVAAAAVAGLAIPVKNVEA). Positions 38 to 94 (IKWDKAPCRFCGTGCSVLVGTQNGRVVASQGDPDADVNRGLNCIKGYFLPKIMYGKD) constitute a 4Fe-4S Mo/W bis-MGD-type domain. [4Fe-4S] cluster contacts are provided by C45, C48, C52, and C80. Residues K82, Q149, N174, C178, 211 to 218 (WGSNMAEM), 242 to 246 (STFEH), 261 to 263 (QSD), M372, Q376, N482, 508 to 509 (SD), K531, D558, and 718 to 727 (TGRVLEHWHT) each bind Mo-bis(molybdopterin guanine dinucleotide). A substrate-binding site is contributed by F794. Mo-bis(molybdopterin guanine dinucleotide) is bound by residues N802 and K819.

This sequence belongs to the prokaryotic molybdopterin-containing oxidoreductase family. NasA/NapA/NarB subfamily. As to quaternary structure, component of the periplasmic nitrate reductase NapAB complex composed of NapA and NapB. It depends on [4Fe-4S] cluster as a cofactor. Mo-bis(molybdopterin guanine dinucleotide) serves as cofactor. In terms of processing, predicted to be exported by the Tat system. The position of the signal peptide cleavage has not been experimentally proven.

Its subcellular location is the periplasm. The catalysed reaction is 2 Fe(II)-[cytochrome] + nitrate + 2 H(+) = 2 Fe(III)-[cytochrome] + nitrite + H2O. Catalytic subunit of the periplasmic nitrate reductase complex NapAB. Receives electrons from NapB and catalyzes the reduction of nitrate to nitrite. The chain is Periplasmic nitrate reductase from Pasteurella multocida (strain Pm70).